Here is a 288-residue protein sequence, read N- to C-terminus: Transposase InsF for insertion sequence IS3fB (288 aa).

Residues 124–287 (YASGPNQKWA…SPEQFENQNL (164 aa)) form the Integrase catalytic domain.

This sequence belongs to the transposase IS3/IS150/IS904 family.

Involved in the transposition of the insertion sequence IS3. This is Transposase InsF for insertion sequence IS3fB (insF7) from Escherichia coli (strain K12).